Consider the following 176-residue polypeptide: Peptide deformylase 1 (176 aa).

Residues Cys99 and His141 each contribute to the Fe cation site. Residue Glu142 is part of the active site. Residue His145 participates in Fe cation binding.

Belongs to the polypeptide deformylase family. The cofactor is Fe(2+).

The catalysed reaction is N-terminal N-formyl-L-methionyl-[peptide] + H2O = N-terminal L-methionyl-[peptide] + formate. In terms of biological role, removes the formyl group from the N-terminal Met of newly synthesized proteins. Requires at least a dipeptide for an efficient rate of reaction. N-terminal L-methionine is a prerequisite for activity but the enzyme has broad specificity at other positions. In Nitrosomonas europaea (strain ATCC 19718 / CIP 103999 / KCTC 2705 / NBRC 14298), this protein is Peptide deformylase 1.